A 600-amino-acid chain; its full sequence is MTHSPFPSWPDTAADLIAVATGRMAADMLIRGGKWVNVHTREVLDGYDVAIIRGRIACVVPDATNCTGPDTHMIRANGRYMIPGLCDGHMHIESGMLTPAEFARAVIPHGTTSMFTDPHEIANVLGLEGVRMMHDEALMQPVNIFTQMPSCAPSAPGLETTGFEITAADVADAMAWPGIVGLGEMMNFPGVSNADPKMLAEIAATQRAGKTVGGHYASPDLGPAFAGYIAGGPADDHEGTCEADAIARMRQGMRSMIRLGSAWYDVESQITAITEKGLDPRNMILCTDDCHSGTLVNDGHMNRVVRHAIECGCDPLVALQMATINTATHFGLEREIGSITPGRRADIILTSDLRTLPIETVIARGQVVAEDGHCLVECPHFDWPAAARQTVHMGKTLGPDDFTINAPKGANAVTANVIGVVENQAPTKALKFELPVTEGRVQATGDVAQIALVERHRATGSVTNAFVSGFGYQGRMAMASTVAHDSHHMIVVGTDADDMARAANRLGEVGGGIVLFKDGVELALVELPIAGLMSDRPAAEVAAKADKMMQAMRDCGCTLNNAYMQHSLLALVVIPELRISDLGLVDVRTFEFIPVIESPT.

Belongs to the metallo-dependent hydrolases superfamily. Adenine deaminase family. Mn(2+) is required as a cofactor.

The enzyme catalyses adenine + H2O + H(+) = hypoxanthine + NH4(+). The polypeptide is Adenine deaminase (Roseobacter denitrificans (strain ATCC 33942 / OCh 114) (Erythrobacter sp. (strain OCh 114))).